We begin with the raw amino-acid sequence, 603 residues long: Aspartate--tRNA(Asp/Asn) ligase (603 aa).

Position 182 (E182) interacts with L-aspartate. Residues 206-209 (QLFK) form an aspartate region. An L-aspartate-binding site is contributed by R228. Residues 228-230 (RDE) and Q237 contribute to the ATP site. H454 contacts L-aspartate. E500 is a binding site for ATP. R507 is a binding site for L-aspartate. ATP is bound at residue 552-555 (GLDR).

Belongs to the class-II aminoacyl-tRNA synthetase family. Type 1 subfamily. As to quaternary structure, homodimer.

It localises to the cytoplasm. It catalyses the reaction tRNA(Asx) + L-aspartate + ATP = L-aspartyl-tRNA(Asx) + AMP + diphosphate. Its function is as follows. Aspartyl-tRNA synthetase with relaxed tRNA specificity since it is able to aspartylate not only its cognate tRNA(Asp) but also tRNA(Asn). Reaction proceeds in two steps: L-aspartate is first activated by ATP to form Asp-AMP and then transferred to the acceptor end of tRNA(Asp/Asn). This Aquifex aeolicus (strain VF5) protein is Aspartate--tRNA(Asp/Asn) ligase.